The chain runs to 130 residues: Small ribosomal subunit protein uS9 (130 aa).

It belongs to the universal ribosomal protein uS9 family.

The protein is Small ribosomal subunit protein uS9 of Streptococcus suis (strain 98HAH33).